Here is a 452-residue protein sequence, read N- to C-terminus: Probable alpha-galactosidase B (452 aa).

The N-terminal stretch at 1–24 (MLHRATTTAAAAAAAALLLCPVQA) is a signal peptide. Cysteines 47 and 79 form a disulfide. 2 N-linked (GlcNAc...) asparagine glycosylation sites follow: Asn87 and Asn138. Cysteines 129 and 159 form a disulfide. The active-site Nucleophile is the Asp157. Residue Asn184 is glycosylated (N-linked (GlcNAc...) asparagine). A substrate-binding site is contributed by 231-235 (DWGQA). The Proton donor role is filled by Asp253. Residues Asn292, Asn391, Asn409, and Asn410 are each glycosylated (N-linked (GlcNAc...) asparagine).

It belongs to the glycosyl hydrolase 27 family.

It localises to the secreted. The enzyme catalyses Hydrolysis of terminal, non-reducing alpha-D-galactose residues in alpha-D-galactosides, including galactose oligosaccharides, galactomannans and galactolipids.. Hydrolyzes a variety of simple alpha-D-galactoside as well as more complex molecules such as oligosaccharides and polysaccharides. This chain is Probable alpha-galactosidase B, found in Talaromyces emersonii (Thermophilic fungus).